We begin with the raw amino-acid sequence, 434 residues long: ATP phosphoribosyltransferase regulatory subunit (434 aa).

Residues Met1–Val48 are disordered. Residues Ser27–Ser38 show a composition bias toward low complexity.

It belongs to the class-II aminoacyl-tRNA synthetase family. HisZ subfamily. Heteromultimer composed of HisG and HisZ subunits.

It is found in the cytoplasm. It functions in the pathway amino-acid biosynthesis; L-histidine biosynthesis; L-histidine from 5-phospho-alpha-D-ribose 1-diphosphate: step 1/9. Functionally, required for the first step of histidine biosynthesis. May allow the feedback regulation of ATP phosphoribosyltransferase activity by histidine. This chain is ATP phosphoribosyltransferase regulatory subunit, found in Synechococcus sp. (strain JA-2-3B'a(2-13)) (Cyanobacteria bacterium Yellowstone B-Prime).